We begin with the raw amino-acid sequence, 527 residues long: Calcium and calcium/calmodulin-dependent serine/threonine-protein kinase (527 aa).

Positions 12 to 314 (YEVSEILGRG…AQELLSDPWV (303 aa)) constitute a Protein kinase domain. ATP is bound at residue 18–26 (LGRGGFSVV). The segment at 25 to 51 (VVRKGTRKSNNDDEKSQSQSKSQSQSQ) is disordered. Over residues 41–51 (QSQSKSQSQSQ) the composition is skewed to low complexity. Residue lysine 55 participates in ATP binding. The interval 59-78 (RLGTSNNLPRKKDGGENSTE) is disordered. Aspartate 179 acts as the Proton acceptor in catalysis. Residues 239 to 255 (MWSLGVILYILLSGYPP) traverse the membrane as a helical segment. Threonine 279 carries the phosphothreonine modification. The calmodulin-binding stretch occupies residues 337–350 (ARRKLRAAAIASVW). Positions 358–379 (TKKLKSLVGSYDLKEDEIENLR) form a coiled coil. 3 EF-hand domains span residues 408-443 (SLIPFAARIFDLFDNNRDGTVDMREILCGFSSLKNS), 444-479 (KGEDALRLCFQMYDTDRSGCITKEEVASMLRALPYD), and 486-521 (TEPGKLDEIFDLMDANSDGKVTFDEFKAAMQRDSSL). 15 residues coordinate Ca(2+): aspartate 421, asparagine 423, aspartate 425, threonine 427, glutamate 432, aspartate 457, aspartate 459, serine 461, cysteine 463, glutamate 468, aspartate 499, asparagine 501, aspartate 503, lysine 505, and glutamate 510.

It belongs to the protein kinase superfamily. CAMK Ser/Thr protein kinase family. CaMK subfamily. Post-translationally, autophosphorylation.

It localises to the membrane. The catalysed reaction is L-seryl-[protein] + ATP = O-phospho-L-seryl-[protein] + ADP + H(+). It catalyses the reaction L-threonyl-[protein] + ATP = O-phospho-L-threonyl-[protein] + ADP + H(+). Its activity is regulated as follows. Activated by calcium. Autophosphorylation may play an important role in the regulation of the kinase activity. In terms of biological role, protein kinase that recognizes the calcium spiking induced by Nod factors and translates this signal to components controlling nodulation and mycorrhizal infection responses. The protein is Calcium and calcium/calmodulin-dependent serine/threonine-protein kinase (SYM9) of Pisum sativum (Garden pea).